The primary structure comprises 447 residues: GTPase Der (447 aa).

EngA-type G domains follow at residues 3 to 167 (PVVA…HLED) and 180 to 353 (IKLA…KAAN). GTP contacts are provided by residues 9–16 (GRPNVGKS), 56–60 (DTGGF), 119–122 (NKAE), 186–193 (GRPNVGKS), 233–237 (DTAGL), and 298–301 (NKWD). A KH-like domain is found at 354–438 (CKMSTPILTR…PMRIEFKSST (85 aa)).

Belongs to the TRAFAC class TrmE-Era-EngA-EngB-Septin-like GTPase superfamily. EngA (Der) GTPase family. In terms of assembly, associates with the 50S ribosomal subunit.

Its function is as follows. GTPase that plays an essential role in the late steps of ribosome biogenesis. This Albidiferax ferrireducens (strain ATCC BAA-621 / DSM 15236 / T118) (Rhodoferax ferrireducens) protein is GTPase Der.